We begin with the raw amino-acid sequence, 150 residues long: Ribonuclease pancreatic delta-type (150 aa).

The signal sequence occupies residues 1 to 25 (MGLEKSFILFSLLVLVLGWVQPSLG). Residue R35 participates in substrate binding. H37 functions as the Proton acceptor in the catalytic mechanism. 4 disulfide bridges follow: C51–C110, C65–C121, C83–C136, and C90–C98. Substrate contacts are provided by residues 66–70 (KRVNT), K91, and R111. H145 functions as the Proton donor in the catalytic mechanism.

It belongs to the pancreatic ribonuclease family. As to quaternary structure, monomer.

Its subcellular location is the secreted. It catalyses the reaction an [RNA] containing cytidine + H2O = an [RNA]-3'-cytidine-3'-phosphate + a 5'-hydroxy-ribonucleotide-3'-[RNA].. The catalysed reaction is an [RNA] containing uridine + H2O = an [RNA]-3'-uridine-3'-phosphate + a 5'-hydroxy-ribonucleotide-3'-[RNA].. Functionally, endonuclease that catalyzes the cleavage of RNA on the 3' side of pyrimidine nucleotides. Acts on single-stranded and double-stranded RNA. The chain is Ribonuclease pancreatic delta-type (Rnase1d) from Rattus norvegicus (Rat).